We begin with the raw amino-acid sequence, 181 residues long: Inner membrane-spanning protein YciB (181 aa).

5 consecutive transmembrane segments (helical) span residues 22–42 (IYTA…VTYA), 50–70 (MQLI…FLHD), 80–100 (IVYC…KPVI), 122–142 (WVLF…EMPL), and 148–168 (FKVF…GMYV).

Belongs to the YciB family.

The protein resides in the cell inner membrane. Plays a role in cell envelope biogenesis, maintenance of cell envelope integrity and membrane homeostasis. This chain is Inner membrane-spanning protein YciB, found in Aliivibrio fischeri (strain MJ11) (Vibrio fischeri).